An 88-amino-acid chain; its full sequence is Small ribosomal subunit protein uS19 (88 aa).

Belongs to the universal ribosomal protein uS19 family.

In terms of biological role, protein S19 forms a complex with S13 that binds strongly to the 16S ribosomal RNA. This is Small ribosomal subunit protein uS19 from Chlamydia felis (strain Fe/C-56) (Chlamydophila felis).